The primary structure comprises 242 residues: Cysteine-rich venom protein VAR11 (242 aa).

Positions 1–19 (MILLKLYLTLAAILCQSRG) are cleaved as a signal peptide. The region spanning 41–169 (NKHNDLRRTV…SLKYFQVCQY (129 aa)) is the SCP domain. Cystine bridges form between Cys77-Cys156, Cys95-Cys170, Cys151-Cys167, Cys189-Cys196, Cys192-Cys201, Cys205-Cys237, Cys214-Cys231, and Cys223-Cys235. Positions 205–237 (CAYNDDYTSCPDLTKQVGCNHPVTANCKASCQC) constitute a ShKT domain.

It belongs to the CRISP family. Expressed by the venom gland.

The protein resides in the secreted. Its function is as follows. Blocks ryanodine receptors, and potassium channels. In Varanus varius (Lace monitor lizard), this protein is Cysteine-rich venom protein VAR11.